We begin with the raw amino-acid sequence, 124 residues long: Hemoglobin subunit alpha (124 aa).

The Globin domain occupies 1 to 124 (PLSAADKTII…VAKALSSHYR (124 aa)). Residue His57 participates in O2 binding. Heme b is bound at residue His79.

This sequence belongs to the globin family. In terms of assembly, hb 1 is a heterotetramer of two alpha and two beta-1 chains. Hb 2 is a heterotetramer of two alpha and two beta-2 chains. Hb 3 is a heterotetramer of two alpha and two beta-3 chains. In terms of tissue distribution, red blood cells (at protein level).

Its function is as follows. Involved in oxygen transport from gills to the various peripheral tissues. The chain is Hemoglobin subunit alpha from Somniosus microcephalus (Greenland sleeper shark).